The following is a 295-amino-acid chain: Hydroxyquinol 1,2-dioxygenase (295 aa).

4 residues coordinate Fe cation: Tyr-165, Tyr-200, His-224, and His-226.

The protein belongs to the intradiol ring-cleavage dioxygenase family. The cofactor is Fe(3+).

It carries out the reaction benzene-1,2,4-triol + O2 = maleylacetate + 2 H(+). It functions in the pathway aromatic compound metabolism. Involved in the gamma-resorcylate (2,6-dihydroxybenzoate) catabolism. Catalyzes the conversion of hydroxyquinol to malelylacetate. This chain is Hydroxyquinol 1,2-dioxygenase, found in Rhizobium sp. (strain MTP-10005).